The chain runs to 664 residues: 1,4-alpha-glucan branching enzyme GlgB 2 (664 aa).

Residues 1–17 (MGGKEMRNCKELKHEKN) show a composition bias toward basic and acidic residues. The interval 1 to 31 (MGGKEMRNCKELKHEKNGNVTEKVGKNKGKS) is disordered. The active-site Nucleophile is the D342. Catalysis depends on E395, which acts as the Proton donor.

Belongs to the glycosyl hydrolase 13 family. GlgB subfamily. As to quaternary structure, monomer.

The catalysed reaction is Transfers a segment of a (1-&gt;4)-alpha-D-glucan chain to a primary hydroxy group in a similar glucan chain.. Its pathway is glycan biosynthesis; glycogen biosynthesis. Functionally, catalyzes the formation of the alpha-1,6-glucosidic linkages in glycogen by scission of a 1,4-alpha-linked oligosaccharide from growing alpha-1,4-glucan chains and the subsequent attachment of the oligosaccharide to the alpha-1,6 position. The protein is 1,4-alpha-glucan branching enzyme GlgB 2 (glgB2) of Clostridium perfringens (strain 13 / Type A).